A 379-amino-acid chain; its full sequence is Chaperone protein DnaJ (379 aa).

The region spanning 4-69 (DLYETLGVKK…QKRAAYDRYG (66 aa)) is the J domain. The CR-type zinc-finger motif lies at 137-215 (GKTAQIRVPT…CHGQGRVTEE (79 aa)). Positions 150, 153, 167, 170, 189, 192, 203, and 206 each coordinate Zn(2+). 4 CXXCXGXG motif repeats span residues 150-157 (CDVCTGSG), 167-174 (CATCQGSG), 189-196 (CPTCGGRG), and 203-210 (CTKCHGQG).

The protein belongs to the DnaJ family. In terms of assembly, homodimer. Zn(2+) is required as a cofactor.

It is found in the cytoplasm. In terms of biological role, participates actively in the response to hyperosmotic and heat shock by preventing the aggregation of stress-denatured proteins and by disaggregating proteins, also in an autonomous, DnaK-independent fashion. Unfolded proteins bind initially to DnaJ; upon interaction with the DnaJ-bound protein, DnaK hydrolyzes its bound ATP, resulting in the formation of a stable complex. GrpE releases ADP from DnaK; ATP binding to DnaK triggers the release of the substrate protein, thus completing the reaction cycle. Several rounds of ATP-dependent interactions between DnaJ, DnaK and GrpE are required for fully efficient folding. Also involved, together with DnaK and GrpE, in the DNA replication of plasmids through activation of initiation proteins. The sequence is that of Chaperone protein DnaJ from Sinorhizobium fredii (strain NBRC 101917 / NGR234).